We begin with the raw amino-acid sequence, 29 residues long: ATP synthase subunit 9, mitochondrial (29 aa).

This sequence belongs to the ATPase C chain family. As to quaternary structure, F-type ATPases have 2 components, CF(1) - the catalytic core - and CF(0) - the membrane proton channel. CF(1) has five subunits: alpha(3), beta(3), gamma(1), delta(1), epsilon(1). CF(0) has three main subunits: a, b and c.

Its subcellular location is the mitochondrion membrane. Mitochondrial membrane ATP synthase (F(1)F(0) ATP synthase or Complex V) produces ATP from ADP in the presence of a proton gradient across the membrane which is generated by electron transport complexes of the respiratory chain. F-type ATPases consist of two structural domains, F(1) - containing the extramembraneous catalytic core and F(0) - containing the membrane proton channel, linked together by a central stalk and a peripheral stalk. During catalysis, ATP synthesis in the catalytic domain of F(1) is coupled via a rotary mechanism of the central stalk subunits to proton translocation. Part of the complex F(0) domain. A homomeric c-ring of probably 10 subunits is part of the complex rotary element. This is ATP synthase subunit 9, mitochondrial (ATP9) from Wickerhamomyces pijperi (Yeast).